The chain runs to 340 residues: Probable quinone oxidoreductase (340 aa).

Belongs to the zinc-containing alcohol dehydrogenase family. Quinone oxidoreductase subfamily.

It catalyses the reaction 2 a quinone + NADPH + H(+) = 2 a 1,4-benzosemiquinone + NADP(+). This is Probable quinone oxidoreductase from Leishmania amazonensis.